Reading from the N-terminus, the 417-residue chain is Gamma-glutamyl phosphate reductase (417 aa).

It belongs to the gamma-glutamyl phosphate reductase family.

It is found in the cytoplasm. It catalyses the reaction L-glutamate 5-semialdehyde + phosphate + NADP(+) = L-glutamyl 5-phosphate + NADPH + H(+). Its pathway is amino-acid biosynthesis; L-proline biosynthesis; L-glutamate 5-semialdehyde from L-glutamate: step 2/2. Its function is as follows. Catalyzes the NADPH-dependent reduction of L-glutamate 5-phosphate into L-glutamate 5-semialdehyde and phosphate. The product spontaneously undergoes cyclization to form 1-pyrroline-5-carboxylate. This chain is Gamma-glutamyl phosphate reductase, found in Streptococcus agalactiae serotype Ia (strain ATCC 27591 / A909 / CDC SS700).